We begin with the raw amino-acid sequence, 301 residues long: tRNA dimethylallyltransferase (301 aa).

ATP is bound at residue 8–15; it reads GPTAVGKT. A substrate-binding site is contributed by 10-15; sequence TAVGKT. The segment at 33-36 is interaction with substrate tRNA; that stretch reads DSRQ.

It belongs to the IPP transferase family. As to quaternary structure, monomer. Mg(2+) serves as cofactor.

It carries out the reaction adenosine(37) in tRNA + dimethylallyl diphosphate = N(6)-dimethylallyladenosine(37) in tRNA + diphosphate. Its function is as follows. Catalyzes the transfer of a dimethylallyl group onto the adenine at position 37 in tRNAs that read codons beginning with uridine, leading to the formation of N6-(dimethylallyl)adenosine (i(6)A). In Thermosipho melanesiensis (strain DSM 12029 / CIP 104789 / BI429), this protein is tRNA dimethylallyltransferase.